The primary structure comprises 1059 residues: Carbamoyl phosphate synthase large chain (1059 aa).

The tract at residues 1 to 401 is carboxyphosphate synthetic domain; sequence MPKRQDISKI…AMLKAVRSLE (401 aa). 12 residues coordinate ATP: Arg-129, Arg-169, Gly-175, Gly-176, Arg-208, Ile-210, Glu-215, Gly-241, Ile-242, His-243, Gln-284, and Glu-298. Residues 133–327 enclose the ATP-grasp 1 domain; it reads KALMERLNEP…IAKMAAKIAV (195 aa). Mg(2+) is bound by residues Gln-284, Glu-298, and Asn-300. Residues Gln-284, Glu-298, and Asn-300 each coordinate Mn(2+). Residues 402–546 form an oligomerization domain region; it reads IGAIGLDDIT…YATYEQENES (145 aa). The carbamoyl phosphate synthetic domain stretch occupies residues 547-929; that stretch reads IISTKKSVLV…ALYKAFIASN (383 aa). The region spanning 671 to 861 is the ATP-grasp 2 domain; that stretch reads DQVIKELALP…LAQLATRVML (191 aa). The ATP site is built by Arg-707, Ser-746, Leu-748, Glu-752, Gly-777, Val-778, His-779, Ser-780, Gln-820, and Glu-832. Mg(2+) contacts are provided by Gln-820, Glu-832, and Asn-834. Mn(2+) is bound by residues Gln-820, Glu-832, and Asn-834. In terms of domain architecture, MGS-like spans 930–1059; the sequence is IKVPRYGNVL…SRSFTVKEMH (130 aa). The allosteric domain stretch occupies residues 930–1059; that stretch reads IKVPRYGNVL…SRSFTVKEMH (130 aa).

This sequence belongs to the CarB family. Composed of two chains; the small (or glutamine) chain promotes the hydrolysis of glutamine to ammonia, which is used by the large (or ammonia) chain to synthesize carbamoyl phosphate. Tetramer of heterodimers (alpha,beta)4. It depends on Mg(2+) as a cofactor. Mn(2+) is required as a cofactor.

It carries out the reaction hydrogencarbonate + L-glutamine + 2 ATP + H2O = carbamoyl phosphate + L-glutamate + 2 ADP + phosphate + 2 H(+). It catalyses the reaction hydrogencarbonate + NH4(+) + 2 ATP = carbamoyl phosphate + 2 ADP + phosphate + 2 H(+). The protein operates within amino-acid biosynthesis; L-arginine biosynthesis; carbamoyl phosphate from bicarbonate: step 1/1. It participates in pyrimidine metabolism; UMP biosynthesis via de novo pathway; (S)-dihydroorotate from bicarbonate: step 1/3. Large subunit of the glutamine-dependent carbamoyl phosphate synthetase (CPSase). CPSase catalyzes the formation of carbamoyl phosphate from the ammonia moiety of glutamine, carbonate, and phosphate donated by ATP, constituting the first step of 2 biosynthetic pathways, one leading to arginine and/or urea and the other to pyrimidine nucleotides. The large subunit (synthetase) binds the substrates ammonia (free or transferred from glutamine from the small subunit), hydrogencarbonate and ATP and carries out an ATP-coupled ligase reaction, activating hydrogencarbonate by forming carboxy phosphate which reacts with ammonia to form carbamoyl phosphate. In Leuconostoc mesenteroides subsp. mesenteroides (strain ATCC 8293 / DSM 20343 / BCRC 11652 / CCM 1803 / JCM 6124 / NCDO 523 / NBRC 100496 / NCIMB 8023 / NCTC 12954 / NRRL B-1118 / 37Y), this protein is Carbamoyl phosphate synthase large chain.